Reading from the N-terminus, the 278-residue chain is Putative ABC transporter ATP-binding protein MTBMA_c05830 (278 aa).

The 236-residue stretch at 4-239 (IEAVNIRYTY…IDTIRGADLR (236 aa)) folds into the ABC transporter domain. 37–44 (GPNGAGKS) is a binding site for ATP.

Belongs to the ABC transporter superfamily.

The protein localises to the cell membrane. Functionally, probably part of an ABC transporter complex. Responsible for energy coupling to the transport system. This Methanothermobacter marburgensis (strain ATCC BAA-927 / DSM 2133 / JCM 14651 / NBRC 100331 / OCM 82 / Marburg) (Methanobacterium thermoautotrophicum) protein is Putative ABC transporter ATP-binding protein MTBMA_c05830.